The following is a 124-amino-acid chain: Fluoride-specific ion channel FluC (124 aa).

4 helical membrane passes run Met-1–Asn-21, Thr-36–Phe-56, Leu-66–Ala-86, and Ala-94–Phe-114. Residues Gly-74 and Thr-77 each contribute to the Na(+) site.

The protein belongs to the fluoride channel Fluc/FEX (TC 1.A.43) family.

It is found in the cell inner membrane. The catalysed reaction is fluoride(in) = fluoride(out). With respect to regulation, na(+) is not transported, but it plays an essential structural role and its presence is essential for fluoride channel function. Its function is as follows. Fluoride-specific ion channel. Important for reducing fluoride concentration in the cell, thus reducing its toxicity. This chain is Fluoride-specific ion channel FluC, found in Rhodopseudomonas palustris (strain ATCC BAA-98 / CGA009).